Here is a 338-residue protein sequence, read N- to C-terminus: MEKVCVLGAGSWGSALAMVLAENGHDTLVWTHRAEQAEEINRMHTNKKYLPETVLPTNLHATSDIAKAATHAETIVVAVPTKAIREVCEKLTAELTKKVLFVHVSKGIEPDSLKRISEILAESLPAEKVDEIVVLSGPSHAEEVVLHHPTTVTAACADIDAAEKVQDLFMNQFFRVYTNDDVIGVEIGGALKNVIALAAGITDGLNYGDNAKAALITRGLAEITRLGVKMGGNPFTFSGLTGMGDLIVTCTSVHSRNWRAGNMLGQGMKLQEVLDQMGMVVEGVRTTKAAYQLAEKYGVAMPISTELYSVLFNDVEPKVAVDALMMRMKKREIDEMKH.

Positions 11, 12, 32, 33, and 106 each coordinate NADPH. Sn-glycerol 3-phosphate contacts are provided by K106, G137, and S139. An NADPH-binding site is contributed by A141. Positions 192, 245, 255, 256, and 257 each coordinate sn-glycerol 3-phosphate. Catalysis depends on K192, which acts as the Proton acceptor. NADPH is bound at residue R256. NADPH-binding residues include V280 and E282.

The protein belongs to the NAD-dependent glycerol-3-phosphate dehydrogenase family.

The protein localises to the cytoplasm. The catalysed reaction is sn-glycerol 3-phosphate + NAD(+) = dihydroxyacetone phosphate + NADH + H(+). The enzyme catalyses sn-glycerol 3-phosphate + NADP(+) = dihydroxyacetone phosphate + NADPH + H(+). The protein operates within membrane lipid metabolism; glycerophospholipid metabolism. In terms of biological role, catalyzes the reduction of the glycolytic intermediate dihydroxyacetone phosphate (DHAP) to sn-glycerol 3-phosphate (G3P), the key precursor for phospholipid synthesis. The protein is Glycerol-3-phosphate dehydrogenase [NAD(P)+] of Lysinibacillus sphaericus (strain C3-41).